Here is a 217-residue protein sequence, read N- to C-terminus: Large ribosomal subunit protein bL25 (217 aa).

The interval 187–217 is disordered; it reads STPSGLEVEEETGEEESAEPEVIEKGKKEEE. The span at 193-207 shows a compositional bias: acidic residues; sequence EVEEETGEEESAEPE. Over residues 208-217 the composition is skewed to basic and acidic residues; it reads VIEKGKKEEE.

Belongs to the bacterial ribosomal protein bL25 family. CTC subfamily. Part of the 50S ribosomal subunit; part of the 5S rRNA/L5/L18/L25 subcomplex. Contacts the 5S rRNA. Binds to the 5S rRNA independently of L5 and L18.

Its function is as follows. This is one of the proteins that binds to the 5S RNA in the ribosome where it forms part of the central protuberance. This is Large ribosomal subunit protein bL25 from Thermosipho africanus (strain TCF52B).